The following is a 62-amino-acid chain: Sperm protamine P1 (62 aa).

The disordered stretch occupies residues 1–62 (MARCRRHSRS…RYSRRGRRRY (62 aa)).

Belongs to the protamine P1 family. Testis.

Its subcellular location is the nucleus. It localises to the chromosome. Its function is as follows. Protamines substitute for histones in the chromatin of sperm during the haploid phase of spermatogenesis. They compact sperm DNA into a highly condensed, stable and inactive complex. This is Sperm protamine P1 (PRM1) from Planigale maculata sinualis (Common planigale).